An 83-amino-acid chain; its full sequence is Small ribosomal subunit protein bS16 (83 aa).

Belongs to the bacterial ribosomal protein bS16 family.

In Shewanella frigidimarina (strain NCIMB 400), this protein is Small ribosomal subunit protein bS16.